We begin with the raw amino-acid sequence, 460 residues long: Cysteine--tRNA ligase (460 aa).

Cys-28 is a binding site for Zn(2+). Positions 30–40 (MTVYDYCHLGH) match the 'HIGH' region motif. Zn(2+) is bound by residues Cys-209, His-234, and Glu-238. The 'KMSKS' region signature appears at 266 to 270 (KMSKS). Lys-269 is a binding site for ATP.

The protein belongs to the class-I aminoacyl-tRNA synthetase family. In terms of assembly, monomer. It depends on Zn(2+) as a cofactor.

The protein resides in the cytoplasm. It catalyses the reaction tRNA(Cys) + L-cysteine + ATP = L-cysteinyl-tRNA(Cys) + AMP + diphosphate. This is Cysteine--tRNA ligase from Pseudomonas putida (strain ATCC 700007 / DSM 6899 / JCM 31910 / BCRC 17059 / LMG 24140 / F1).